Reading from the N-terminus, the 159-residue chain is Aspartate carbamoyltransferase regulatory chain (159 aa).

Cys113, Cys118, Cys143, and Cys146 together coordinate Zn(2+).

This sequence belongs to the PyrI family. Contains catalytic and regulatory chains. The cofactor is Zn(2+).

Its function is as follows. Involved in allosteric regulation of aspartate carbamoyltransferase. The protein is Aspartate carbamoyltransferase regulatory chain of Methanococcoides burtonii (strain DSM 6242 / NBRC 107633 / OCM 468 / ACE-M).